Consider the following 78-residue polypeptide: Translational regulator CsrA (78 aa).

This sequence belongs to the CsrA/RsmA family. As to quaternary structure, homodimer; the beta-strands of each monomer intercalate to form a hydrophobic core, while the alpha-helices form wings that extend away from the core.

The protein resides in the cytoplasm. A translational regulator that binds mRNA to regulate translation initiation and/or mRNA stability. Usually binds in the 5'-UTR at or near the Shine-Dalgarno sequence preventing ribosome-binding, thus repressing translation. Its main target seems to be the major flagellin gene, while its function is anatagonized by FliW. In Borrelia recurrentis (strain A1), this protein is Translational regulator CsrA.